Reading from the N-terminus, the 129-residue chain is MARDKQRTKKKERKNIAAGVAHVNSSFNNTKILISDVQGNAIAWSSAGTMGFKGSRKSTPYAAQMAAEDAGKKAQEHGVKTLEVQVQGPGSGRESALRALAAVGFNITAIRDVTPIAHNGCRPPKRRRV.

Belongs to the universal ribosomal protein uS11 family. In terms of assembly, part of the 30S ribosomal subunit. Interacts with proteins S7 and S18. Binds to IF-3.

Functionally, located on the platform of the 30S subunit, it bridges several disparate RNA helices of the 16S rRNA. Forms part of the Shine-Dalgarno cleft in the 70S ribosome. This is Small ribosomal subunit protein uS11 from Dinoroseobacter shibae (strain DSM 16493 / NCIMB 14021 / DFL 12).